Consider the following 305-residue polypeptide: Olfactory receptor 9G19 (305 aa).

Topologically, residues methionine 1–lysine 24 are extracellular. A helical transmembrane segment spans residues valine 25 to isoleucine 45. Residues methionine 46–histidine 55 are Cytoplasmic-facing. The chain crosses the membrane as a helical span at residues threonine 56 to tyrosine 76. Topologically, residues threonine 77–cysteine 96 are extracellular. Cysteine 96 and cysteine 178 form a disulfide bridge. Residues valine 97–methionine 117 form a helical membrane-spanning segment. Over alanine 118–lysine 138 the chain is Cytoplasmic. Residues leucine 139 to threonine 159 form a helical membrane-spanning segment. The Extracellular segment spans residues lysine 160 to serine 204. Residues asparagine 205–leucine 225 traverse the membrane as a helical segment. Residues arginine 226–alanine 236 are Cytoplasmic-facing. The chain crosses the membrane as a helical span at residues phenylalanine 237–isoleucine 257. Residues tyrosine 258–aspartate 270 are Extracellular-facing. Residues lysine 271–leucine 291 form a helical membrane-spanning segment. Residues arginine 292–lysine 305 are Cytoplasmic-facing.

Belongs to the G-protein coupled receptor 1 family.

It is found in the cell membrane. Functionally, odorant receptor. This chain is Olfactory receptor 9G19, found in Mus musculus (Mouse).